The primary structure comprises 256 residues: Hypodermin-A (256 aa).

An N-terminal signal peptide occupies residues 1 to 22; that stretch reads MLKFVILLCSIAYVFGAVVPLG. Residues 23 to 30 constitute a propeptide, activation peptide; that stretch reads MLSQSDGR. Residues 31–254 form the Peptidase S1 domain; the sequence is IVGGVESKIE…VRSLIVSNAE (224 aa). A disulfide bridge links Cys-56 with Cys-72. Active-site charge relay system residues include His-71 and Asp-116. 2 cysteine pairs are disulfide-bonded: Cys-180–Cys-197 and Cys-206–Cys-230. The active-site Charge relay system is the Ser-210.

It belongs to the peptidase S1 family.

The protein localises to the secreted. In terms of biological role, specificity, limited to carboxyl side of arginine residue in B-chain of insulin. The polypeptide is Hypodermin-A (Hypoderma lineatum (Early cattle grub)).